We begin with the raw amino-acid sequence, 557 residues long: Dihydroxy-acid dehydratase (557 aa).

Mg(2+) is bound at residue Asp-78. Cys-119 is a [2Fe-2S] cluster binding site. Mg(2+) contacts are provided by Asp-120 and Lys-121. An N6-carboxylysine modification is found at Lys-121. Cys-191 lines the [2Fe-2S] cluster pocket. Residue Glu-442 participates in Mg(2+) binding. Ser-468 acts as the Proton acceptor in catalysis.

The protein belongs to the IlvD/Edd family. Homodimer. Requires [2Fe-2S] cluster as cofactor. Mg(2+) serves as cofactor.

The catalysed reaction is (2R)-2,3-dihydroxy-3-methylbutanoate = 3-methyl-2-oxobutanoate + H2O. It carries out the reaction (2R,3R)-2,3-dihydroxy-3-methylpentanoate = (S)-3-methyl-2-oxopentanoate + H2O. The protein operates within amino-acid biosynthesis; L-isoleucine biosynthesis; L-isoleucine from 2-oxobutanoate: step 3/4. It participates in amino-acid biosynthesis; L-valine biosynthesis; L-valine from pyruvate: step 3/4. Functionally, functions in the biosynthesis of branched-chain amino acids. Catalyzes the dehydration of (2R,3R)-2,3-dihydroxy-3-methylpentanoate (2,3-dihydroxy-3-methylvalerate) into 2-oxo-3-methylpentanoate (2-oxo-3-methylvalerate) and of (2R)-2,3-dihydroxy-3-methylbutanoate (2,3-dihydroxyisovalerate) into 2-oxo-3-methylbutanoate (2-oxoisovalerate), the penultimate precursor to L-isoleucine and L-valine, respectively. The chain is Dihydroxy-acid dehydratase from Lachnoclostridium phytofermentans (strain ATCC 700394 / DSM 18823 / ISDg) (Clostridium phytofermentans).